The chain runs to 514 residues: Ferrochelatase-2, chloroplastic (514 aa).

Belongs to the ferrochelatase family.

Its subcellular location is the plastid. The protein resides in the chloroplast. It carries out the reaction heme b + 2 H(+) = protoporphyrin IX + Fe(2+). It functions in the pathway porphyrin-containing compound metabolism; protoheme biosynthesis; protoheme from protoporphyrin-IX: step 1/1. Catalyzes the ferrous insertion into protoporphyrin IX. The sequence is that of Ferrochelatase-2, chloroplastic (HEMH) from Cucumis sativus (Cucumber).